A 456-amino-acid polypeptide reads, in one-letter code: Phospholipase A1 member A (456 aa).

Residues 1–25 (MPPDFWERCFWLWGLLLWLSVGSTG) form the signal peptide. N-linked (GlcNAc...) asparagine glycosylation occurs at asparagine 34. Serine 166 acts as the Nucleophile in catalysis. Aspartate 190 serves as the catalytic Charge relay system. A disulfide bridge connects residues cysteine 245 and cysteine 258. Catalysis depends on histidine 260, which acts as the Charge relay system. Intrachain disulfides connect cysteine 282–cysteine 293 and cysteine 296–cysteine 304.

This sequence belongs to the AB hydrolase superfamily. Lipase family.

The protein localises to the secreted. The enzyme catalyses a 1,2-diacyl-sn-glycero-3-phospho-L-serine + H2O = a 2-acyl-sn-glycero-3-phospho-L-serine + a fatty acid + H(+). It catalyses the reaction 1,2-di-(9Z)-octadecenoyl-sn-glycero-3-phospho-L-serine + H2O = 2-(9Z-octadecenoyl)-sn-glycero-3-phospho-L-serine + (9Z)-octadecenoate + H(+). The catalysed reaction is 1-hexadecanoyl-2-(5Z,8Z,11Z,14Z-eicosatetraenoyl)-sn-glycero-3-phospho-L-serine + H2O = 2-(5Z,8Z,11Z,14Z)-eicosatetraenoyl-sn-glycero-3-phospho-L-serine + hexadecanoate + H(+). It carries out the reaction a 1-acyl-sn-glycero-3-phospho-L-serine + H2O = sn-glycero-3-phospho-L-serine + a fatty acid + H(+). The enzyme catalyses 1-(9Z-octadecenoyl)-sn-glycero-3-phospho-L-serine + H2O = sn-glycero-3-phospho-L-serine + (9Z)-octadecenoate + H(+). In terms of biological role, hydrolyzes the ester bond of the acyl group attached at the sn-1 position of phosphatidylserines (phospholipase A1 activity) and 1-acyl-2-lysophosphatidylserines (lysophospholipase activity) in the pathway of phosphatidylserines acyl chain remodeling. Cleaves phosphatidylserines exposed on the outer leaflet of the plasma membrane of apoptotic cells producing 2-acyl-1-lysophosphatidylserines, which in turn enhance mast cell activation and histamine production. Has no activity toward other glycerophospholipids including phosphatidylcholines, phosphatidylethanolamines, phosphatidic acids or phosphatidylinositols, or glycerolipids such as triolein. The chain is Phospholipase A1 member A (PLA1A) from Bos taurus (Bovine).